Here is a 473-residue protein sequence, read N- to C-terminus: Ornithine decarboxylase (473 aa).

Lys-106 bears the N6-(pyridoxal phosphate)lysine mark. Residues Ser-240, Gly-277, and 313-316 (EPGR) each bind pyridoxal 5'-phosphate. 367–368 (FD) serves as a coordination point for substrate. The active-site Proton donor; shared with dimeric partner is Cys-417. Asp-418 is a binding site for substrate. Position 447 (Tyr-447) interacts with pyridoxal 5'-phosphate.

The protein belongs to the Orn/Lys/Arg decarboxylase class-II family. As to quaternary structure, homodimer. Only the dimer is catalytically active, as the active sites are constructed of residues from both monomers. Pyridoxal 5'-phosphate serves as cofactor.

It is found in the cytoplasm. It carries out the reaction L-ornithine + H(+) = putrescine + CO2. It functions in the pathway amine and polyamine biosynthesis; putrescine biosynthesis via L-ornithine pathway; putrescine from L-ornithine: step 1/1. Its activity is regulated as follows. Inhibited by antizyme (AZ) OAZ1 in response to polyamine levels. AZ inhibits the assembly of the functional homodimer by binding to ODC monomers and targeting them for ubiquitin-independent proteolytic destruction by the 26S proteasome. In terms of biological role, catalyzes the first and rate-limiting step of polyamine biosynthesis that converts ornithine into putrescine, which is the precursor for the polyamines, spermidine and spermine. Polyamines are essential for cell proliferation and are implicated in cellular processes, ranging from DNA replication to apoptosis. The sequence is that of Ornithine decarboxylase (SPE1) from Candida albicans (strain SC5314 / ATCC MYA-2876) (Yeast).